The primary structure comprises 134 residues: MSWQTYVDDHLMCDIEGHEGHRLTAAAIVGHDGSVWAQSATFPQFKPEEMNGIMTDSNEPGHLAPTGLHLGGTKYMVIQGEAGAVIRGKKGSGGITIKKTGQALVCGIYEEPVTPGQCNMVVERLGDYLLEQGL.

Residues Cys13 and Cys118 are joined by a disulfide bond. The Involved in PIP2 interaction signature appears at 84 to 100 (AVIRGKKGSGGITIKKT). Thr114 carries the phosphothreonine modification.

It belongs to the profilin family. In terms of assembly, occurs in many kinds of cells as a complex with monomeric actin in a 1:1 ratio. Post-translationally, phosphorylated by MAP kinases.

Its subcellular location is the cytoplasm. It localises to the cytoskeleton. Functionally, binds to actin and affects the structure of the cytoskeleton. At high concentrations, profilin prevents the polymerization of actin, whereas it enhances it at low concentrations. This chain is Profilin-3, found in Olea europaea (Common olive).